A 219-amino-acid polypeptide reads, in one-letter code: MFKKKNVSLAVVRRLPRYLRYVEDLLNHDIMRISSSELSQRMGYTASQVRQDFNNFGGFGQQGYGYSTQVLYENLVKILGLDKNFKMIIVGVGNLGQALANYANFYKKGFRLVGLFDVDPQKVGKSIRNIKIQHIDELKDFIKKNDVDIGVLCVPSEVAQEVANLMVEGGIKGIWNFTAKEIEVKDDVVVENVHLIDSLMVLSYKLNEKLLEKQEASQK.

Residues 17–56 (RYLRYVEDLLNHDIMRISSSELSQRMGYTASQVRQDFNNF) constitute a DNA-binding region (H-T-H motif). Residue 91-96 (GVGNLG) participates in NAD(+) binding.

It belongs to the transcriptional regulatory Rex family. Homodimer.

It is found in the cytoplasm. Functionally, modulates transcription in response to changes in cellular NADH/NAD(+) redox state. This chain is Redox-sensing transcriptional repressor Rex, found in Caldicellulosiruptor saccharolyticus (strain ATCC 43494 / DSM 8903 / Tp8T 6331).